The primary structure comprises 794 residues: Phosphoenolpyruvate synthase (794 aa).

Catalysis depends on histidine 422, which acts as the Tele-phosphohistidine intermediate. Substrate is bound by residues arginine 512, arginine 579, glutamate 681, glycine 702, serine 703, asparagine 704, and aspartate 705. Residue glutamate 681 participates in Mg(2+) binding. Aspartate 705 provides a ligand contact to Mg(2+). The Proton donor role is filled by cysteine 752.

It belongs to the PEP-utilizing enzyme family. The cofactor is Mg(2+).

The catalysed reaction is pyruvate + ATP + H2O = phosphoenolpyruvate + AMP + phosphate + 2 H(+). Its pathway is carbohydrate biosynthesis; gluconeogenesis. Catalyzes the phosphorylation of pyruvate to phosphoenolpyruvate. The polypeptide is Phosphoenolpyruvate synthase (ppsA) (Neisseria meningitidis serogroup B (strain ATCC BAA-335 / MC58)).